The primary structure comprises 916 residues: Protein prickle (916 aa).

2 disordered regions span residues 49–105 (PLSP…AGGS) and 127–176 (QHLQ…IPVD). Low complexity predominate over residues 145–156 (SSPSPALSSSIT). Over residues 157-171 (TGGGGVTRGGGGGGH) the composition is skewed to gly residues. A PET domain is found at 167–275 (GGGGHIIPVD…TVKQLATNQI (109 aa)). LIM zinc-binding domains are found at residues 274-338 (QICD…ETLK), 339-399 (PRCS…MFAE), and 400-462 (YCDF…GEPP). Disordered stretches follow at residues 460 to 593 (EPPT…PNHR), 635 to 671 (VIPG…QPQS), 692 to 725 (DAIQ…ENLP), and 763 to 870 (RSKS…DTVY). Polar residues-rich tracts occupy residues 507-517 (SPISERSTPHS), 526-569 (EMST…SRTL), and 642-654 (AKTN…SMPE). Residues 655–671 (LSQSLQQQQQQQQQPQS) are compositionally biased toward low complexity. The segment covering 777-793 (RSSKSKRRSSHHHQHHR) has biased composition (basic residues). The segment covering 796 to 805 (GESSSYSGTS) has biased composition (low complexity). Over residues 829–844 (VPDVEFIEHQDHHRGD) the composition is skewed to basic and acidic residues. The span at 852-867 (RSVCSTCSSSSSSADD) shows a compositional bias: low complexity.

Belongs to the prickle / espinas / testin family. In terms of assembly, interacts with dsh; PET and LIM domains interact with dsh DEP domain, in wing cells. Interacts with Vang in photoreceptor cells.

Its subcellular location is the cell membrane. Acts in a planar cell polarity (PCP) complex; polarization along the apical/basal axis of epithelial cells. PCP signaling in the wing disk requires the receptor fz and the cytoplasmic proteins dsh and pk. These act in a feedback loop leading to activation of the jnk cascade and subsequent polarized arrangement of hairs and bristles. Dgo and pk compete with one another for dsh binding, thereby modulating fz dsh activity and ensuring tight control over fz PCP signaling. Vang, stan and pk function together to regulate the establishment of tissue polarity in the adult eye. The polypeptide is Protein prickle (Aedes aegypti (Yellowfever mosquito)).